Here is a 564-residue protein sequence, read N- to C-terminus: Type 2 DNA topoisomerase 6 subunit B (564 aa).

ATP contacts are provided by residues Asn46, Asp78, 99–100 (TK), 109–116 (GQQGIGIS), and Lys471.

It belongs to the TOP6B family. In terms of assembly, homodimer. Heterotetramer of two Top6A and two Top6B chains.

The catalysed reaction is ATP-dependent breakage, passage and rejoining of double-stranded DNA.. In terms of biological role, relaxes both positive and negative superturns and exhibits a strong decatenase activity. This Pyrococcus abyssi (strain GE5 / Orsay) protein is Type 2 DNA topoisomerase 6 subunit B.